A 113-amino-acid polypeptide reads, in one-letter code: Cell cycle protein GpsB (113 aa).

Positions 32–70 (LDSVIKDYENFGKEIERMKNENDRLTDKVDELNKQVSAG) form a coiled coil.

This sequence belongs to the GpsB family. In terms of assembly, forms polymers through the coiled coil domains. Interacts with PBP1, MreC and EzrA.

It localises to the cytoplasm. Functionally, divisome component that associates with the complex late in its assembly, after the Z-ring is formed, and is dependent on DivIC and PBP2B for its recruitment to the divisome. Together with EzrA, is a key component of the system that regulates PBP1 localization during cell cycle progression. Its main role could be the removal of PBP1 from the cell pole after pole maturation is completed. Also contributes to the recruitment of PBP1 to the division complex. Not essential for septum formation. In Pediococcus pentosaceus (strain ATCC 25745 / CCUG 21536 / LMG 10740 / 183-1w), this protein is Cell cycle protein GpsB.